Here is a 157-residue protein sequence, read N- to C-terminus: 3-hydroxyacyl-[acyl-carrier-protein] dehydratase FabZ (157 aa).

His58 is a catalytic residue.

The protein belongs to the thioester dehydratase family. FabZ subfamily.

The protein resides in the cytoplasm. It catalyses the reaction a (3R)-hydroxyacyl-[ACP] = a (2E)-enoyl-[ACP] + H2O. Its function is as follows. Involved in unsaturated fatty acids biosynthesis. Catalyzes the dehydration of short chain beta-hydroxyacyl-ACPs and long chain saturated and unsaturated beta-hydroxyacyl-ACPs. In Rhizorhabdus wittichii (strain DSM 6014 / CCUG 31198 / JCM 15750 / NBRC 105917 / EY 4224 / RW1) (Sphingomonas wittichii), this protein is 3-hydroxyacyl-[acyl-carrier-protein] dehydratase FabZ.